Here is a 176-residue protein sequence, read N- to C-terminus: Imidazoleglycerol-phosphate dehydratase (176 aa).

It belongs to the imidazoleglycerol-phosphate dehydratase family.

The protein localises to the cytoplasm. It carries out the reaction D-erythro-1-(imidazol-4-yl)glycerol 3-phosphate = 3-(imidazol-4-yl)-2-oxopropyl phosphate + H2O. It participates in amino-acid biosynthesis; L-histidine biosynthesis; L-histidine from 5-phospho-alpha-D-ribose 1-diphosphate: step 6/9. This Pyrococcus furiosus (strain ATCC 43587 / DSM 3638 / JCM 8422 / Vc1) protein is Imidazoleglycerol-phosphate dehydratase.